A 475-amino-acid polypeptide reads, in one-letter code: Sulfate adenylyltransferase subunit 1 (475 aa).

A tr-type G domain is found at 25-239; it reads KSLLRFLTCG…EVLETVEIQR (215 aa). The tract at residues 34-41 is G1; that stretch reads GSVDDGKS. 34–41 is a GTP binding site; that stretch reads GSVDDGKS. Residues 92–96 form a G2 region; that stretch reads GITID. Positions 113 to 116 are G3; that stretch reads DTPG. GTP is bound by residues 113-117 and 168-171; these read DTPGH and NKMD. The tract at residues 168–171 is G4; the sequence is NKMD. A G5 region spans residues 206–208; it reads SAL.

It belongs to the TRAFAC class translation factor GTPase superfamily. Classic translation factor GTPase family. CysN/NodQ subfamily. As to quaternary structure, heterodimer composed of CysD, the smaller subunit, and CysN.

The enzyme catalyses sulfate + ATP + H(+) = adenosine 5'-phosphosulfate + diphosphate. It participates in sulfur metabolism; hydrogen sulfide biosynthesis; sulfite from sulfate: step 1/3. Its function is as follows. With CysD forms the ATP sulfurylase (ATPS) that catalyzes the adenylation of sulfate producing adenosine 5'-phosphosulfate (APS) and diphosphate, the first enzymatic step in sulfur assimilation pathway. APS synthesis involves the formation of a high-energy phosphoric-sulfuric acid anhydride bond driven by GTP hydrolysis by CysN coupled to ATP hydrolysis by CysD. The chain is Sulfate adenylyltransferase subunit 1 from Escherichia coli (strain ATCC 8739 / DSM 1576 / NBRC 3972 / NCIMB 8545 / WDCM 00012 / Crooks).